Reading from the N-terminus, the 65-residue chain is Large ribosomal subunit protein uL29 (65 aa).

This sequence belongs to the universal ribosomal protein uL29 family.

In Desulforamulus reducens (strain ATCC BAA-1160 / DSM 100696 / MI-1) (Desulfotomaculum reducens), this protein is Large ribosomal subunit protein uL29.